A 221-amino-acid chain; its full sequence is Endonuclease V (221 aa).

Residues Asp43 and Asp109 each contribute to the Mg(2+) site.

This sequence belongs to the endonuclease V family. Mg(2+) is required as a cofactor.

Its subcellular location is the cytoplasm. The catalysed reaction is Endonucleolytic cleavage at apurinic or apyrimidinic sites to products with a 5'-phosphate.. Its function is as follows. DNA repair enzyme involved in the repair of deaminated bases. Selectively cleaves double-stranded DNA at the second phosphodiester bond 3' to a deoxyinosine leaving behind the intact lesion on the nicked DNA. This Petrotoga mobilis (strain DSM 10674 / SJ95) protein is Endonuclease V.